Consider the following 153-residue polypeptide: Bacteriohemerythrin (153 aa).

Fe cation contacts are provided by histidine 21, histidine 57, glutamate 61, histidine 76, histidine 80, histidine 115, and aspartate 120.

It belongs to the hemerythrin family. Monomer.

Functionally, oxygen-binding protein. May be involved in a storage mechanism or for delivery to oxygen-requiring enzymes. The oxygen-binding site contains two iron atoms. The protein is Bacteriohemerythrin of Stenotrophomonas maltophilia (strain R551-3).